Reading from the N-terminus, the 172-residue chain is Protein GrpE (172 aa).

The protein belongs to the GrpE family. As to quaternary structure, homodimer.

It is found in the cytoplasm. Functionally, participates actively in the response to hyperosmotic and heat shock by preventing the aggregation of stress-denatured proteins, in association with DnaK and GrpE. It is the nucleotide exchange factor for DnaK and may function as a thermosensor. Unfolded proteins bind initially to DnaJ; upon interaction with the DnaJ-bound protein, DnaK hydrolyzes its bound ATP, resulting in the formation of a stable complex. GrpE releases ADP from DnaK; ATP binding to DnaK triggers the release of the substrate protein, thus completing the reaction cycle. Several rounds of ATP-dependent interactions between DnaJ, DnaK and GrpE are required for fully efficient folding. The chain is Protein GrpE from Thermotoga maritima (strain ATCC 43589 / DSM 3109 / JCM 10099 / NBRC 100826 / MSB8).